Reading from the N-terminus, the 112-residue chain is Nitrogen regulatory protein P-II (112 aa).

Y51 bears the O-UMP-tyrosine mark.

This sequence belongs to the P(II) protein family. In terms of assembly, homotrimer.

The protein localises to the plastid. It localises to the chloroplast. Functionally, P-II indirectly controls the transcription of the glutamine synthetase gene (glnA). P-II prevents NR-II-catalyzed conversion of NR-I to NR-I-phosphate, the transcriptional activator of glnA. When P-II is uridylylated to P-II-UMP, these events are reversed. When the ratio of Gln to 2-ketoglutarate decreases, P-II is uridylylated to P-II-UMP, which causes the deadenylation of glutamine synthetase, so activating the enzyme. The sequence is that of Nitrogen regulatory protein P-II (glnB) from Pyropia yezoensis (Susabi-nori).